The primary structure comprises 369 residues: Anhydro-N-acetylmuramic acid kinase (369 aa).

Residue 12–19 (GTSMDGID) participates in ATP binding.

It belongs to the anhydro-N-acetylmuramic acid kinase family.

The catalysed reaction is 1,6-anhydro-N-acetyl-beta-muramate + ATP + H2O = N-acetyl-D-muramate 6-phosphate + ADP + H(+). The protein operates within amino-sugar metabolism; 1,6-anhydro-N-acetylmuramate degradation. It functions in the pathway cell wall biogenesis; peptidoglycan recycling. Its function is as follows. Catalyzes the specific phosphorylation of 1,6-anhydro-N-acetylmuramic acid (anhMurNAc) with the simultaneous cleavage of the 1,6-anhydro ring, generating MurNAc-6-P. Is required for the utilization of anhMurNAc either imported from the medium or derived from its own cell wall murein, and thus plays a role in cell wall recycling. The sequence is that of Anhydro-N-acetylmuramic acid kinase from Shewanella sediminis (strain HAW-EB3).